A 234-amino-acid chain; its full sequence is Adenylate dimethylallyltransferase (234 aa).

The protein belongs to the isopentenyl transferase family.

It carries out the reaction dimethylallyl diphosphate + AMP = N(6)-(dimethylallyl)adenosine 5'-phosphate + diphosphate. In terms of biological role, transfers dimethylallyl groups to AMP as part of the biosynthesis of cytokinin phytohormones. The protein is Adenylate dimethylallyltransferase (ptz) of Pseudomonas savastanoi (Pseudomonas syringae pv. savastanoi).